A 143-amino-acid polypeptide reads, in one-letter code: Large ribosomal subunit protein uL11 (143 aa).

The protein belongs to the universal ribosomal protein uL11 family. Part of the ribosomal stalk of the 50S ribosomal subunit. Interacts with L10 and the large rRNA to form the base of the stalk. L10 forms an elongated spine to which L12 dimers bind in a sequential fashion forming a multimeric L10(L12)X complex. In terms of processing, one or more lysine residues are methylated.

Its function is as follows. Forms part of the ribosomal stalk which helps the ribosome interact with GTP-bound translation factors. The sequence is that of Large ribosomal subunit protein uL11 from Cellvibrio japonicus (strain Ueda107) (Pseudomonas fluorescens subsp. cellulosa).